A 494-amino-acid chain; its full sequence is ATP synthase subunit beta (494 aa).

177-184 (GGAGVGKT) is a binding site for ATP.

It belongs to the ATPase alpha/beta chains family. As to quaternary structure, F-type ATPases have 2 components, CF(1) - the catalytic core - and CF(0) - the membrane proton channel. CF(1) has five subunits: alpha(3), beta(3), gamma(1), delta(1), epsilon(1). CF(0) has three main subunits: a(1), b(2) and c(9-12). The alpha and beta chains form an alternating ring which encloses part of the gamma chain. CF(1) is attached to CF(0) by a central stalk formed by the gamma and epsilon chains, while a peripheral stalk is formed by the delta and b chains.

It is found in the cell membrane. The enzyme catalyses ATP + H2O + 4 H(+)(in) = ADP + phosphate + 5 H(+)(out). Produces ATP from ADP in the presence of a proton gradient across the membrane. The catalytic sites are hosted primarily by the beta subunits. The protein is ATP synthase subunit beta of Bifidobacterium adolescentis (strain ATCC 15703 / DSM 20083 / NCTC 11814 / E194a).